Reading from the N-terminus, the 379-residue chain is Homoserine O-succinyltransferase (379 aa).

The region spanning 48–357 is the AB hydrolase-1 domain; that stretch reads NAVLICHALS…SAHGHDAFLM (310 aa). Residue S154 is the Nucleophile of the active site. Residue R224 coordinates substrate. Catalysis depends on residues D319 and H352. D353 is a binding site for substrate.

It belongs to the AB hydrolase superfamily. MetX family. As to quaternary structure, homodimer.

The protein resides in the cytoplasm. The catalysed reaction is L-homoserine + succinyl-CoA = O-succinyl-L-homoserine + CoA. The protein operates within amino-acid biosynthesis; L-methionine biosynthesis via de novo pathway; O-succinyl-L-homoserine from L-homoserine: step 1/1. In terms of biological role, transfers a succinyl group from succinyl-CoA to L-homoserine, forming succinyl-L-homoserine. The chain is Homoserine O-succinyltransferase from Neisseria meningitidis serogroup A / serotype 4A (strain DSM 15465 / Z2491).